Reading from the N-terminus, the 457-residue chain is F-box only protein 13 (457 aa).

The region spanning 64-110 is the F-box domain; the sequence is EFPMDDLNDDVLERVLSWLPTSCFFRMSSVCKRWKSSQTSKSFKLAC.

This is F-box only protein 13 (FBX13) from Arabidopsis thaliana (Mouse-ear cress).